A 496-amino-acid polypeptide reads, in one-letter code: Hexokinase-1 (496 aa).

The helical transmembrane segment at 4-24 threads the bilayer; sequence VAVGATVVCTAAVCAVAVLVV. The Hexokinase domain occupies 35-487; sequence GRVLAILKAF…SGIGAALLAA (453 aa). The segment at 90–228 is hexokinase small subdomain; sequence SGDEKGLFYA…GLDMRIAALV (139 aa). Positions 104, 105, and 106 each coordinate ADP. Residues Thr-194, Lys-195, Asn-229, and Asp-230 each contribute to the D-glucose site. The segment at 229-476 is hexokinase large subdomain; that stretch reads NDTVGTLAGG…GSVEVTHSND (248 aa). Thr-253 is an ADP binding site. D-glucose is bound by residues Asn-256, Glu-284, and Glu-315. An ADP-binding site is contributed by Gly-441.

This sequence belongs to the hexokinase family. Interacts with RPT5B in nucleus. Interacts with RHIP1. Interacts with KING1 in mitochondria. Interacts with CLF (via SANT domain) and EZA1/SWN (via SANT domain) in nucleus. As to expression, highly expressed in flowers and siliques, at intermediate levels in roots and stems, and at lower levels in rosette and cauline leaves.

The protein resides in the mitochondrion outer membrane. The protein localises to the nucleus. It catalyses the reaction a D-hexose + ATP = a D-hexose 6-phosphate + ADP + H(+). It carries out the reaction D-fructose + ATP = D-fructose 6-phosphate + ADP + H(+). The catalysed reaction is D-glucose + ATP = D-glucose 6-phosphate + ADP + H(+). The protein operates within carbohydrate metabolism; hexose metabolism. It participates in carbohydrate degradation; glycolysis; D-glyceraldehyde 3-phosphate and glycerone phosphate from D-glucose: step 1/4. Its function is as follows. Fructose and glucose phosphorylating enzyme. May be involved in the phosphorylation of glucose during the export from mitochondrion to cytosol. Acts as a sugar sensor which may regulate sugar-dependent gene repression or activation. Mediates the effects of sugar on plant growth and development independently of its catalytic activity or the sugar metabolism. May regulate the execution of program cell death in plant cells. Promotes roots and leaves growth. Together with sugar, is involved in the regulation of the expression of aquaporin genes, and reduces leaf water conductance, to coordinate sugar levels with the loss of water through transpiration. Regulates cell proliferation and expansion early during leaf development. Involved in sucrose-induced leaf growth stimulation independently of GPT2. May participate to the stimulation of hypocotyl elongation under long-day (LD) conditions. Forms a nuclear complex with CLF and EZA1/SWN to target common glucose-responsive genes and regulate glucose signaling. Is required for CLF- and EZA1/SWN-mediated histone H3 trimethylation on 'Lys-27' (H3K27me3) and glucose-mediated gene repression. This Arabidopsis thaliana (Mouse-ear cress) protein is Hexokinase-1.